We begin with the raw amino-acid sequence, 302 residues long: Protein FdhE homolog (302 aa).

The protein belongs to the FdhE family.

The protein resides in the cytoplasm. Its function is as follows. Necessary for formate dehydrogenase activity. The polypeptide is Protein FdhE homolog (Haemophilus influenzae (strain PittGG)).